A 921-amino-acid polypeptide reads, in one-letter code: Respiratory burst oxidase homolog protein D (921 aa).

Positions 1–71 (MKMRRGNSSN…RSNSVAGGRG (71 aa)) are disordered. Topologically, residues 1–376 (MKMRRGNSSN…KYFILDNWQR (376 aa)) are cytoplasmic. Residues Ser-8, Ser-9, Ser-26, and Ser-39 each carry the phosphoserine modification. Over residues 21–31 (NSDTNSDTESI) the composition is skewed to polar residues. Over residues 44–53 (RPKRASKKNA) the composition is skewed to basic residues. 2 EF-hand-like regions span residues 193–203 (SADSNGLLLSA) and 230–241 (NNVSGDAITKEQ). EF-hand domains lie at 253-288 (SFDA…SASA) and 297-332 (QAKE…APNQ). 5 residues coordinate Ca(2+): Asp-266, Asp-268, Asp-270, Arg-272, and Glu-277. Ser-339, Ser-343, and Ser-347 each carry phosphoserine. A helical membrane pass occupies residues 377–397 (LWIMMLWLGICGGLFTYKFIQ). The Extracellular portion of the chain corresponds to 398 to 461 (YKNKAAYGVM…FDDSLNFHKV (64 aa)). A Ferric oxidoreductase domain is found at 415–572 (KGGAETLKFN…LFIIVYALLI (158 aa)). A helical membrane pass occupies residues 462–482 (IASGIVVGVLLHAGAHLTCDF). Over 483 to 516 (PRLIAADEDTYEPMEKYFGDQPTSYWWFVKGVEG) the chain is Cytoplasmic. A helical membrane pass occupies residues 517-537 (WTGIVMVVLMAIAFTLATPWF). Topologically, residues 538–559 (RRNKLNLPNFLKKLTGFNAFWY) are extracellular. The chain crosses the membrane as a helical span at residues 560 to 580 (THHLFIIVYALLIVHGIKLYL). The Cytoplasmic segment spans residues 581 to 588 (TKIWYQKT). The helical transmembrane segment at 589–606 (TWMYLAVPILLYASERLL) threads the bilayer. Residues 607–734 (RAFRSSIKPV…PYGAPAQDYK (128 aa)) are Extracellular-facing. In terms of domain architecture, FAD-binding FR-type spans 611-732 (SSIKPVKMIK…DGPYGAPAQD (122 aa)). Residues 735 to 755 (KYDVVLLVGLGIGATPMISIL) form a helical membrane-spanning segment. Over 756–921 (KDIINNMKGP…TKFDFHKENF (166 aa)) the chain is Cytoplasmic.

It belongs to the RBOH (TC 5.B.1.3) family. As to quaternary structure, monomer and homodimer. Interacts with BIK1 and FLS2. Interacts with PBL13. Binds to SIK1 upon flagellin perception and becomes activated by phosphorylation. Post-translationally, phosphorylated at Ser-39, Ser-343 and Ser-347 by BIK1 upon flagellin (flg22) treatment. Activated by phosphorylation at Ser-347 mediated by SIK1 and at Ser-8, Ser-9 and Ser-339 upon flagellin (e.g. flg22) perception. In terms of tissue distribution, more abundant in roots than in leaves, stems or inflorescences. Expressed in mesophyll and guard cells.

It localises to the membrane. With respect to regulation, inhibited by diphenylene iodinium (DPI). Calcium-dependent NADPH oxidase that generates superoxide. Involved in the generation of reactive oxygen species (ROS) during incompatible interactions with pathogens, in response to pathogen-associated molecular pattern (PAMP)-triggered immunity (PTI) signaling and in UV-B and abscisic acid ROS-dependent signaling and via SIK1 mediated activation by phosphorylation. Might be required for ROS signal amplification during light stress. This Arabidopsis thaliana (Mouse-ear cress) protein is Respiratory burst oxidase homolog protein D.